Consider the following 90-residue polypeptide: Small ribosomal subunit protein bS20 (90 aa).

It belongs to the bacterial ribosomal protein bS20 family.

Its function is as follows. Binds directly to 16S ribosomal RNA. The chain is Small ribosomal subunit protein bS20 from Francisella tularensis subsp. holarctica (strain FTNF002-00 / FTA).